Reading from the N-terminus, the 159-residue chain is Na(+)/H(+) antiporter subunit E1 (159 aa).

The next 4 membrane-spanning stretches (helical) occupy residues 1 to 21 (MAVQLVLNFIIAVFWLFVTNS), 27 to 47 (FVLGFIFGLVLVYLLHRVLPG), 49 to 69 (FYVITLYRIIKLVIIFLIELI), and 101 to 121 (WQIVLLSNLITLTPGTVVLGV).

The protein belongs to the CPA3 antiporters (TC 2.A.63) subunit E family. May form a heterooligomeric complex that consists of seven subunits: mnhA1, mnhB1, mnhC1, mnhD1, mnhE1, mnhF1 and mnhG1.

It is found in the cell membrane. Its function is as follows. Mnh complex is a Na(+)/H(+) antiporter involved in Na(+) excretion. The protein is Na(+)/H(+) antiporter subunit E1 (mnhE1) of Staphylococcus aureus (strain Mu3 / ATCC 700698).